The chain runs to 473 residues: Photosystem II CP43 reaction center protein (473 aa).

A propeptide spanning residues 1-14 (MKTLYSLRRFYHVE) is cleaved from the precursor. N-acetylthreonine is present on T15. T15 carries the post-translational modification Phosphothreonine. The next 5 membrane-spanning stretches (helical) occupy residues 69-93 (LFEVAHFVPEKPMYEQGLILLPHLA), 134-155 (LLGPETLEESFPFFGYVWKDRN), 178-200 (KALYFGGVYDTWAPGGGDVRKIT), 255-275 (KPFAWARRALVWSGEAYLSYS), and 291-312 (WFNNTAYPSEFYGPTGPEASQA). Residue E367 coordinates [CaMn4O5] cluster. Residues 447-471 (RARAAAAGFEKGIDRDFEPVLSMTP) form a helical membrane-spanning segment.

The protein belongs to the PsbB/PsbC family. PsbC subfamily. As to quaternary structure, PSII is composed of 1 copy each of membrane proteins PsbA, PsbB, PsbC, PsbD, PsbE, PsbF, PsbH, PsbI, PsbJ, PsbK, PsbL, PsbM, PsbT, PsbX, PsbY, PsbZ, Psb30/Ycf12, at least 3 peripheral proteins of the oxygen-evolving complex and a large number of cofactors. It forms dimeric complexes. Binds multiple chlorophylls and provides some of the ligands for the Ca-4Mn-5O cluster of the oxygen-evolving complex. It may also provide a ligand for a Cl- that is required for oxygen evolution. PSII binds additional chlorophylls, carotenoids and specific lipids. serves as cofactor.

It localises to the plastid. The protein localises to the chloroplast thylakoid membrane. Functionally, one of the components of the core complex of photosystem II (PSII). It binds chlorophyll and helps catalyze the primary light-induced photochemical processes of PSII. PSII is a light-driven water:plastoquinone oxidoreductase, using light energy to abstract electrons from H(2)O, generating O(2) and a proton gradient subsequently used for ATP formation. The polypeptide is Photosystem II CP43 reaction center protein (Manihot esculenta (Cassava)).